A 984-amino-acid chain; its full sequence is DNA polymerase (984 aa).

A bipartite nuclear localization signal region spans residues 804 to 827 (DNPGKKRKSTDDNEGPSPKRRVIT). The tract at residues 939–948 (CSVKRKRDDD) is monopartite nuclear localization signal. Positions 943 to 969 (RKRDDDDDNDDDDDDDCDSSDSENDTQ) are disordered. A compositionally biased stretch (acidic residues) spans 947–966 (DDDDNDDDDDDDCDSSDSEN).

Belongs to the DNA polymerase type-B family.

The protein localises to the host nucleus. It catalyses the reaction DNA(n) + a 2'-deoxyribonucleoside 5'-triphosphate = DNA(n+1) + diphosphate. Its function is as follows. Replicates the viral genome, host DNA polymerases cannot substitute for the viral enzyme in this process. The protein is DNA polymerase (POL) of Autographa californica nuclear polyhedrosis virus (AcMNPV).